Consider the following 102-residue polypeptide: MYAVIKTGGKQYKVAEGDFLKVEKLDNIVGDTIEFGEVLMIGGDAVKVGAPLVAGASVTAKVAVQGRDKKILVFKSKRRKNSRKLIGHRQYHTVLKIEKISA.

It belongs to the bacterial ribosomal protein bL21 family. As to quaternary structure, part of the 50S ribosomal subunit. Contacts protein L20.

Its function is as follows. This protein binds to 23S rRNA in the presence of protein L20. In Trichlorobacter lovleyi (strain ATCC BAA-1151 / DSM 17278 / SZ) (Geobacter lovleyi), this protein is Large ribosomal subunit protein bL21.